Consider the following 122-residue polypeptide: Large ribosomal subunit protein uL14 (122 aa).

The protein belongs to the universal ribosomal protein uL14 family. Part of the 50S ribosomal subunit. Forms a cluster with proteins L3 and L19. In the 70S ribosome, L14 and L19 interact and together make contacts with the 16S rRNA in bridges B5 and B8.

Binds to 23S rRNA. Forms part of two intersubunit bridges in the 70S ribosome. This is Large ribosomal subunit protein uL14 from Borreliella afzelii (strain PKo) (Borrelia afzelii).